A 522-amino-acid polypeptide reads, in one-letter code: Probable protein kinase UbiB (522 aa).

The region spanning 119–497 is the Protein kinase domain; the sequence is SFERVPVASA…QRRTNRLLQS (379 aa). ATP contacts are provided by residues 125 to 133 and lysine 151; that span reads VASASIAQV. Aspartate 286 functions as the Proton acceptor in the catalytic mechanism. Residues 496–516 traverse the membrane as a helical segment; sequence QSIIYGGMGFVLGLLALQFLI.

The protein belongs to the ABC1 family. UbiB subfamily.

Its subcellular location is the cell inner membrane. Its pathway is cofactor biosynthesis; ubiquinone biosynthesis [regulation]. Is probably a protein kinase regulator of UbiI activity which is involved in aerobic coenzyme Q (ubiquinone) biosynthesis. This chain is Probable protein kinase UbiB, found in Paracidovorax citrulli (strain AAC00-1) (Acidovorax citrulli).